The primary structure comprises 174 residues: Centrosomal protein 20 (174 aa).

A necessary and sufficient for homooligomerization and localization to centrosomes and pericentriolar satellites region spans residues 1–104 (MATVAELKAV…AFEESKDNTI (104 aa)). Residues 49–81 (ENLLINELIREYLEFNKYKYTASVLIAESGQPV) form the LisH domain. Residues 129–174 (GPSLQPSDPSLGRQPSRRKPMDDHLRKEEQKSTNIEDLHVSQAVNR) are disordered. S144 carries the post-translational modification Phosphoserine. The span at 147–167 (KPMDDHLRKEEQKSTNIEDLH) shows a compositional bias: basic and acidic residues.

This sequence belongs to the CEP43 family. In terms of assembly, homooligomer; probably required for localization to centrosomes. Forms a complex with KIAA0753/OFIP and OFD1; within this complex may stabilize the interaction between OFD1 and KIAA0753/OFIP. Interacts with PCM1; this interaction may be mediated by KIAA0753/OFIP. Interacts with PLK1 in later G1, S, G2 and M phases of the cell cycle; this interaction recruits PLK1 to centrosomes. As to expression, widely expressed. Detected in brain, heart, kidney, liver, lung, skeletal muscle, placenta and intestine.

Its subcellular location is the cytoplasm. It localises to the cytoskeleton. It is found in the microtubule organizing center. The protein resides in the centrosome. The protein localises to the centriole. Its subcellular location is the cell projection. It localises to the cilium. It is found in the cilium basal body. The protein resides in the cytoplasmic granule. The protein localises to the centriolar satellite. Its function is as follows. Involved in the biogenesis of cilia. Required for the recruitment of PLK1 to centrosomes and S phase progression. This chain is Centrosomal protein 20, found in Homo sapiens (Human).